The chain runs to 385 residues: Proteinase-activated receptor 4 (385 aa).

The N-terminal stretch at 1–17 (MWGRLLLWPLVLGFSLS) is a signal peptide. Positions 18–47 (GGTQTPSVYDESGSTGGGDDSTPSILPAPR) are cleaved as a propeptide — removed for receptor activation. The tract at residues 21–42 (QTPSVYDESGSTGGGDDSTPSI) is disordered. Topologically, residues 48 to 82 (GYPGQVCANDSDTLELPDSSRALLLGWVPTRLVPA) are extracellular. Asparagine 56 is a glycosylation site (N-linked (GlcNAc...) asparagine). Residues 83–103 (LYGLVLVVGLPANGLALWVLA) traverse the membrane as a helical segment. The Cytoplasmic segment spans residues 104-108 (TQAPR). Residues 109-129 (LPSTMLLMNLAAADLLLALAL) form a helical membrane-spanning segment. Over 130 to 151 (PPRIAYHLRGQRWPFGEAACRL) the chain is Extracellular. Cysteine 149 and cysteine 228 are oxidised to a cystine. The helical transmembrane segment at 152–172 (ATAALYGHMYGSVLLLAAVSL) threads the bilayer. Residues 173–192 (DRYLALVHPLRARALRGRRL) are Cytoplasmic-facing. A helical transmembrane segment spans residues 193–213 (ALGLCMAAWLMAAALALPLTL). Residues 214–247 (QRQTFRLARSDRVLCHDALPLDAQASHWQPAFTC) are Extracellular-facing. The helical transmembrane segment at 248-268 (LALLGCFLPLLAMLLCYGATL) threads the bilayer. The Cytoplasmic portion of the chain corresponds to 269–283 (HTLAASGRRYGHALR). Residues 284-304 (LTAVVLASAVAFFVPSNLLLL) form a helical membrane-spanning segment. At 305–319 (LHYSDPSPSAWGNLY) the chain is on the extracellular side. Residues 320–343 (GAYVPSLALSTLNSCVDPFIYYYV) traverse the membrane as a helical segment. Residues 344–385 (SAEFRDKVRAGLFQRSPGDTVASKASAEGGSRGMGTHSSLLQ) are Cytoplasmic-facing. The tract at residues 362–385 (DTVASKASAEGGSRGMGTHSSLLQ) is disordered.

The protein belongs to the G-protein coupled receptor 1 family. In terms of processing, a proteolytic cleavage generates a new N-terminus that functions as a tethered ligand. Widely expressed, with highest levels in lung, pancreas, thyroid, testis and small intestine. Not expressed in brain, kidney, spinal cord and peripheral blood leukocytes. Also detected in platelets.

The protein localises to the cell membrane. Its activity is regulated as follows. Activated upon interaction by mucunain, a cowhage (Mucuna pruriens) plant cysteine proteinase. Functionally, receptor for activated thrombin or trypsin coupled to G proteins that stimulate phosphoinositide hydrolysis. May play a role in platelets activation. The polypeptide is Proteinase-activated receptor 4 (F2RL3) (Homo sapiens (Human)).